A 1358-amino-acid polypeptide reads, in one-letter code: DNA-directed RNA polymerase subunit beta (1358 aa).

The protein belongs to the RNA polymerase beta chain family. The RNAP catalytic core consists of 2 alpha, 1 beta, 1 beta' and 1 omega subunit. When a sigma factor is associated with the core the holoenzyme is formed, which can initiate transcription.

It catalyses the reaction RNA(n) + a ribonucleoside 5'-triphosphate = RNA(n+1) + diphosphate. Functionally, DNA-dependent RNA polymerase catalyzes the transcription of DNA into RNA using the four ribonucleoside triphosphates as substrates. The chain is DNA-directed RNA polymerase subunit beta from Francisella tularensis subsp. holarctica (strain LVS).